The following is a 132-amino-acid chain: Small ribosomal subunit protein uS8 (132 aa).

The protein belongs to the universal ribosomal protein uS8 family. In terms of assembly, part of the 30S ribosomal subunit. Contacts proteins S5 and S12.

Its function is as follows. One of the primary rRNA binding proteins, it binds directly to 16S rRNA central domain where it helps coordinate assembly of the platform of the 30S subunit. The chain is Small ribosomal subunit protein uS8 from Syntrophobacter fumaroxidans (strain DSM 10017 / MPOB).